Here is a 206-residue protein sequence, read N- to C-terminus: Large ribosomal subunit protein uL4 (206 aa).

The disordered stretch occupies residues 63-93 (MYKQKGTGRARHHSARAPQFRGGGKAHGPVV). A compositionally biased stretch (basic residues) spans 64 to 77 (YKQKGTGRARHHSA).

The protein belongs to the universal ribosomal protein uL4 family. In terms of assembly, part of the 50S ribosomal subunit.

Its function is as follows. One of the primary rRNA binding proteins, this protein initially binds near the 5'-end of the 23S rRNA. It is important during the early stages of 50S assembly. It makes multiple contacts with different domains of the 23S rRNA in the assembled 50S subunit and ribosome. Functionally, forms part of the polypeptide exit tunnel. The protein is Large ribosomal subunit protein uL4 of Sinorhizobium medicae (strain WSM419) (Ensifer medicae).